A 331-amino-acid polypeptide reads, in one-letter code: Nodulation protein D 2 (331 aa).

The HTH lysR-type domain occupies 6-63 (LDLNLLVALDALMTERSLTAAARKINLSQPAMSAAVARLRSYFRDELFAMRGRKLVPT). The segment at residues 23 to 42 (LTAAARKINLSQPAMSAAVA) is a DNA-binding region (H-T-H motif).

Belongs to the LysR transcriptional regulatory family.

Its function is as follows. NodD regulates the expression of the nodABCFE genes which encode other nodulation proteins. NodD is also a negative regulator of its own expression. Binds flavonoids as inducers. This is Nodulation protein D 2 (nodD2) from Bradyrhizobium elkanii.